We begin with the raw amino-acid sequence, 206 residues long: Small ribosomal subunit protein uS4 (206 aa).

An S4 RNA-binding domain is found at T96 to L159.

Belongs to the universal ribosomal protein uS4 family. Part of the 30S ribosomal subunit. Contacts protein S5. The interaction surface between S4 and S5 is involved in control of translational fidelity.

In terms of biological role, one of the primary rRNA binding proteins, it binds directly to 16S rRNA where it nucleates assembly of the body of the 30S subunit. Functionally, with S5 and S12 plays an important role in translational accuracy. This chain is Small ribosomal subunit protein uS4, found in Shewanella violacea.